Consider the following 164-residue polypeptide: uncharacterized protein (164 aa).

Residues 1–60 constitute a chloroplast transit peptide; sequence MERSASVGVNDGRFGGNQFYSPSFSSSSSSSSMRHVNYSCGSCGYELNLSSTNRITSTIG.

Its subcellular location is the plastid. It localises to the chloroplast. This is an uncharacterized protein from Arabidopsis thaliana (Mouse-ear cress).